The primary structure comprises 95 residues: Antitoxin VapB41 (95 aa).

Its function is as follows. Antitoxin component of a type II toxin-antitoxin (TA) system. The sequence is that of Antitoxin VapB41 (vapB41) from Mycobacterium tuberculosis (strain CDC 1551 / Oshkosh).